A 237-amino-acid polypeptide reads, in one-letter code: Ribosomal RNA small subunit methyltransferase G (237 aa).

Residues Gly-78, Phe-83, 129-130, and Arg-148 contribute to the S-adenosyl-L-methionine site; that span reads AE. Positions 218-237 are disordered; it reads KKETPNKYPRKAGMPNKRPL.

This sequence belongs to the methyltransferase superfamily. RNA methyltransferase RsmG family.

It localises to the cytoplasm. In terms of biological role, specifically methylates the N7 position of a guanine in 16S rRNA. In Streptococcus pneumoniae (strain JJA), this protein is Ribosomal RNA small subunit methyltransferase G.